The primary structure comprises 163 residues: MKELEKYNTCLKRIDEFSQNLGIKKKDRTIFKMKQSENENEKCLVLENGSFDSPEPWFVIDENDEIHTLLSLQSLKNILESLKQSQKENFELRLEKAIYQQIPVDFNDVWTVAMDEIKQKAQNGTMEVSIDLEKLISKIKQEHPNLFVDMQAMIERVNQNERL.

Belongs to the UPF0763 family.

The sequence is that of UPF0763 protein CJJ81176_1011 from Campylobacter jejuni subsp. jejuni serotype O:23/36 (strain 81-176).